The following is a 74-amino-acid chain: Apolipoprotein C-I, acidic form (74 aa).

An N-terminal signal peptide occupies residues 1–26; that stretch reads MRLFLSLPVLVVVLSMVLEGPTPAQG.

It belongs to the apolipoprotein C1 family.

The protein resides in the secreted. The chain is Apolipoprotein C-I, acidic form (APOC1A) from Colobus guereza (Mantled guereza).